The primary structure comprises 182 residues: Dirigent protein 5 (182 aa).

A signal peptide spans 1–23; the sequence is MVGQMKSFLFLFVFLVLTKTVIS. Cys35 and Cys181 are oxidised to a cystine. N-linked (GlcNAc...) asparagine glycans are attached at residues Asn54 and Asn118.

This sequence belongs to the plant dirigent protein family. Homodimer. Confined to shoot meristem, vascular region of cotyledons and siliques abscission zone.

Its subcellular location is the secreted. It localises to the extracellular space. The protein resides in the apoplast. Functionally, dirigent proteins impart stereoselectivity on the phenoxy radical-coupling reaction, yielding optically active lignans from two molecules of coniferyl alcohol in the biosynthesis of lignans, flavonolignans, and alkaloids and thus plays a central role in plant secondary metabolism. Enantiocomplementary dirigent protein that mediates the laccase-catalyzed enantioselective oxidative phenol coupling of (E)-coniferyl alcohol to (-)-pinoresinol. This is Dirigent protein 5 (DIR5) from Arabidopsis thaliana (Mouse-ear cress).